The chain runs to 565 residues: Transmembrane 7 superfamily member 3 (565 aa).

The signal sequence occupies residues 1–21 (MWRLRLLVLAVLAAGSAEAQA). 4 N-linked (GlcNAc...) asparagine glycosylation sites follow: N22, N56, N70, and N259. The next 7 helical transmembrane spans lie at 287-307 (VSTK…CFFG), 311-331 (WKTE…YILI), 341-361 (VRLV…VASW), 364-384 (FGIL…LVSS), 402-422 (VFWV…LGCL), 427-447 (ILAC…SYMF), and 478-498 (NDYI…TLQI).

It is found in the cell membrane. Its function is as follows. Involved in the inhibition of cytokine-induced death of pancreatic beta cells. Involved in the promotion of insulin secretion from pancreatic beta cells. Is a downstream transcriptional target of p53/TP53, and acts as a pro-survival homeostatic factor that attenuates the development of cellular stress. Maintains protein homeostasis and promotes cell survival through attenuation of endoplasmic reticulum (ER) stress and the subsequent induction of unfolded protein response (UPR). In Rattus norvegicus (Rat), this protein is Transmembrane 7 superfamily member 3 (Tm7sf3).